The primary structure comprises 117 residues: Non-specific lipid-transfer protein (117 aa).

An N-terminal signal peptide occupies residues 1 to 26 (MACSAMTKLALVVALCMVVSVPIAQA). 4 cysteine pairs are disulfide-bonded: Cys29–Cys76, Cys39–Cys53, Cys54–Cys99, and Cys74–Cys113.

Belongs to the plant LTP family.

In terms of biological role, plant non-specific lipid-transfer proteins transfer phospholipids as well as galactolipids across membranes. May play a role in wax or cutin deposition in the cell walls of expanding epidermal cells and certain secretory tissues. This chain is Non-specific lipid-transfer protein, found in Prunus avium (Cherry).